The primary structure comprises 387 residues: Alpha-2B adrenergic receptor (387 aa).

A helical membrane pass occupies residues 1–25 (AIAAVITFLILFTIFGNALVILAVL). Residues 26 to 36 (TSRSLRAPQNL) lie on the Cytoplasmic side of the membrane. A helical membrane pass occupies residues 37–62 (FLVSLAAADILVATLIIPFSLANELL). At 63–72 (GYWYFRHTWC) the chain is on the extracellular side. An intrachain disulfide couples Cys72 to Cys151. A helical membrane pass occupies residues 73–95 (XVYLALDVLFCTSSIVHLCAISL). At 96–117 (DRYWAVSRALEYNSKRTPRRIK) the chain is on the cytoplasmic side. Residues 118-140 (CIILTVWLIAAAISLPPLIYKGD) form a helical membrane-spanning segment. The Extracellular segment spans residues 141–156 (QDPQPRGRPQCKLNQE). Residues 157–180 (AWYILSSSIGSFFVPCLIMILVYL) traverse the membrane as a helical segment. The Cytoplasmic portion of the chain corresponds to 181–351 (RIYLIAKRSS…LTREKRFTFV (171 aa)). The segment at 193–303 (RKPRAKGXPR…VPASPALACS (111 aa)) is disordered. Acidic residues predominate over residues 279–290 (PEEEAEEEEECG). The helical transmembrane segment at 352-375 (LAVVIGVFVLCWFPFFFSYSLGAI) threads the bilayer. Topologically, residues 376-384 (CPQHCKVPH) are extracellular. Residues 385-387 (GLF) traverse the membrane as a helical segment.

It belongs to the G-protein coupled receptor 1 family. Adrenergic receptor subfamily. ADRA2B sub-subfamily. As to quaternary structure, interacts with RAB26. Interacts with PPP1R9B. Interacts with GGA1, GGA2 and GGA3.

It is found in the cell membrane. In terms of biological role, alpha-2 adrenergic receptors mediate the catecholamine-induced inhibition of adenylate cyclase through the action of G proteins. The sequence is that of Alpha-2B adrenergic receptor (ADRA2B) from Macroscelides proboscideus (Short-eared elephant shrew).